The sequence spans 634 residues: DNA-directed RNA polymerase subunit gamma (634 aa).

The Zn(2+) site is built by C74, C76, C89, and C92. Residues D471, D473, and D475 each contribute to the Mg(2+) site.

It belongs to the RNA polymerase beta' chain family. RpoC1 subfamily. In cyanobacteria the RNAP catalytic core is composed of 2 alpha, 1 beta, 1 beta', 1 gamma and 1 omega subunit. When a sigma factor is associated with the core the holoenzyme is formed, which can initiate transcription. It depends on Mg(2+) as a cofactor. Zn(2+) is required as a cofactor.

It catalyses the reaction RNA(n) + a ribonucleoside 5'-triphosphate = RNA(n+1) + diphosphate. DNA-dependent RNA polymerase catalyzes the transcription of DNA into RNA using the four ribonucleoside triphosphates as substrates. The polypeptide is DNA-directed RNA polymerase subunit gamma (Prochlorococcus marinus subsp. pastoris (strain CCMP1986 / NIES-2087 / MED4)).